We begin with the raw amino-acid sequence, 334 residues long: Ribosomal lysine N-methyltransferase 5 (334 aa).

Residues tryptophan 88, 155-157 (GAG), aspartate 177, tryptophan 227, and methionine 254 contribute to the S-adenosyl-L-methionine site.

The protein belongs to the class I-like SAM-binding methyltransferase superfamily. RKM5 family.

Its function is as follows. S-adenosyl-L-methionine-dependent protein-lysine N-methyltransferase that methylates 60S ribosomal protein L1. In Lachancea thermotolerans (strain ATCC 56472 / CBS 6340 / NRRL Y-8284) (Yeast), this protein is Ribosomal lysine N-methyltransferase 5 (RKM5).